Reading from the N-terminus, the 381-residue chain is 2-oxoglutarate-dependent dioxygenase FGSG_00048 (381 aa).

The protein belongs to the iron/ascorbate-dependent oxidoreductase family. The cofactor is Fe(2+).

It participates in mycotoxin biosynthesis. Functionally, 2-oxoglutarate-dependent dioxygenase; part of the gene cluster that mediates the biosynthesis of gramillins A and B, bicyclic lipopeptides that induce cell death in maize leaves but not in wheat leaves. The nonribosomal peptide synthetase GRA1 incorporates respectively a glutamic adic (Glu), a leucine (Leu), a serine (Ser), a hydroxyglutamine (HOGln), a 2-amino decanoic acid, and 2 cysteins (CysB and CysA). The biosynthesis of 2-amino decanoic acid incorporated in gramillins could be initiated by a fatty acid synthase composed of the alpha and beta subunits FGSG_00036 and FGSG_11656. The cytochrome P450 monooxygenase FGSG_15680 could hydroxylate the fatty acid chain. Subsequent oxidation to the ketone by the oxidoreductase FGSG_00048 and transamination by aminotransferase FGSG_00049 could form 2-amino-decanoic acid. On the other hand, FGSG_15680 could also be responsible for the HO-modified glutamine at the gamma-position. Whether hydroxylation occurs on the fully assembled product or on the Gln residue prior to assembly into the gramillins requires further proof. The thioredoxin FGSG_00043 could also be required for the disulfide-bond formation between CysA and CysB. The specific involvement of the remaining proteins from the cluster is more difficult to discern, but could have broader regulatory (FGSG_00040 and FGSG_11657) or enzymatic functions (FGSG_00044 and FGSG_00045). The final C-domain of GRA1 does not possess the expected sequence of a termination CT domain, often implicated in macrocyclization and release of a cyclopeptidein fungal NRPs; and the thioesterase FGSG_00047 may act in concert with the terminal C-domain of GRA1 to catalyze the formation of the macrocyclic anhydride and release of the products. This Gibberella zeae (strain ATCC MYA-4620 / CBS 123657 / FGSC 9075 / NRRL 31084 / PH-1) (Wheat head blight fungus) protein is 2-oxoglutarate-dependent dioxygenase FGSG_00048.